The chain runs to 235 residues: Secretory carrier-associated membrane protein 5B (235 aa).

The Cytoplasmic segment spans residues 1 to 39 (MSDKPNNFPPLPRFIPLKPCFYQDFDTDIPDVHRTTAKR). Residues 40 to 60 (LYYLWMLNSITLGVNLIGCLA) traverse the membrane as a helical segment. Residues 61-67 (WLIGGGG) are Extracellular-facing. The helical transmembrane segment at 68 to 88 (ATNFGLAFLWLILFTPCSYVC) threads the bilayer. Residues 89–102 (WFRPIYKAFKTDSS) lie on the Cytoplasmic side of the membrane. A helical membrane pass occupies residues 103-125 (FNFMAFFFTFTGQLVISIIQAVG). At 126-148 (IPGWGVCGWIASISFFGTNVGSA) the chain is on the extracellular side. Residues 149–169 (VVMLIPTIMFTAVAVLSFVAL) form a helical membrane-spanning segment. Topologically, residues 170–235 (TKVHRFYRGA…TPNYGYSNQM (66 aa)) are cytoplasmic.

Belongs to the SCAMP family. SCAMP5 subfamily.

The protein localises to the cell membrane. It is found in the golgi apparatus membrane. Its subcellular location is the golgi apparatus. The protein resides in the trans-Golgi network membrane. It localises to the recycling endosome membrane. The protein localises to the cytoplasmic vesicle. It is found in the secretory vesicle. Its subcellular location is the synaptic vesicle membrane. Its function is as follows. Required for the calcium-dependent exocytosis of signal sequence-containing cytokines. Probably acts in cooperation with the SNARE machinery. The chain is Secretory carrier-associated membrane protein 5B (scamp5-b) from Xenopus laevis (African clawed frog).